Here is a 201-residue protein sequence, read N- to C-terminus: Dermatopontin (201 aa).

Residues Met1–Gly18 form the signal peptide. Residue Gln19 is modified to Pyrrolidone carboxylic acid. Positions Gln19–Phe186 are 2 X 53-55 AA tandem repeats. Tyr23 is modified (sulfotyrosine). A run of 4 repeats spans residues Pro26–Pro79, Asp70–Tyr75, Thr80–Tyr135, and Asp125–Phe130. 5 cysteine pairs are disulfide-bonded: Cys50/Cys77, Cys90/Cys132, Cys106/Cys133, Cys139/Cys196, and Cys143/Cys189. A 3 X 6 AA tandem repeats of D-R-[EQ]-W-[NQK]-[FY] region spans residues Asp70–Phe186. Sulfotyrosine is present on residues Tyr162, Tyr164, and Tyr167. One copy of the 2-3 repeat lies at Asp181–Phe186. Tyr194 is subject to Sulfotyrosine.

The protein belongs to the dermatopontin family. As to quaternary structure, interacts with TGFB1, DCN and collagen. In terms of processing, sulfated on tyrosine residue(s).

The protein resides in the secreted. Its subcellular location is the extracellular space. It localises to the extracellular matrix. In terms of biological role, seems to mediate adhesion by cell surface integrin binding. May serve as a communication link between the dermal fibroblast cell surface and its extracellular matrix environment. Enhances TGFB1 activity. Inhibits cell proliferation. Accelerates collagen fibril formation, and stabilizes collagen fibrils against low-temperature dissociation. This is Dermatopontin (Dpt) from Mus musculus (Mouse).